We begin with the raw amino-acid sequence, 222 residues long: uncharacterized protein (222 aa).

It belongs to the PhoU family.

Its subcellular location is the cytoplasm. Functionally, not known; probably involved in phosphate transport and/or metabolism. This is an uncharacterized protein from Deinococcus radiodurans (strain ATCC 13939 / DSM 20539 / JCM 16871 / CCUG 27074 / LMG 4051 / NBRC 15346 / NCIMB 9279 / VKM B-1422 / R1).